A 99-amino-acid polypeptide reads, in one-letter code: Putative septation protein SpoVG (99 aa).

It belongs to the SpoVG family.

In terms of biological role, could be involved in septation. This Aster yellows witches'-broom phytoplasma (strain AYWB) protein is Putative septation protein SpoVG.